The chain runs to 1066 residues: E3 ubiquitin-protein ligase RNF31 (1066 aa).

The interval Met-1–Arg-479 is polyubiquitin-binding. The region spanning Thr-70 to Asp-141 is the PUB domain. Residues Leu-251–Ser-287 form a disordered region. Residues Ala-262–Ser-287 show a composition bias toward low complexity. RanBP2-type zinc fingers lie at residues Pro-293–Cys-325 and Ala-344–Ala-373. Ser-377 is modified (phosphoserine). A RanBP2-type 3 zinc finger spans residues Gln-403–Pro-432. The interval Pro-434 to Met-478 is disordered. The segment covering Gly-454–Pro-464 has biased composition (polar residues). Basic and acidic residues predominate over residues Asp-469–Met-478. The segment at Gly-557–Arg-610 is interaction with RBCK1. A UBA domain is found at Asn-558–Gln-609. Residues Leu-689 to Asp-923 are TRIAD supradomain. Zn(2+) is bound by residues Cys-693, Cys-696, Cys-711, Cys-713, Cys-716, Cys-719, Cys-738, Cys-741, Cys-793, Cys-796, Cys-811, Cys-814, Cys-819, Cys-822, His-830, Cys-835, Cys-865, and Cys-868. The segment at Cys-693 to Arg-743 adopts an RING-type 1 zinc-finger fold. Residues Ala-773–Cys-835 form an IBR-type zinc finger. The RING-type 2; atypical zinc finger occupies Cys-865–Cys-895. Cys-879 is an active-site residue. Zn(2+) is bound by residues Cys-884, Cys-887, Cys-892, Cys-895, Cys-910, and His-919. Positions Lys-904 to Lys-1066 are LDD domain.

Belongs to the RBR family. Component of the LUBAC complex (linear ubiquitin chain assembly complex) which consists of SHARPIN, RBCK1 and RNF31. LUBAC has a MW of approximately 600 kDa suggesting a heteromultimeric assembly of its subunits. Associates with the TNF-R1 signaling complex (TNF-RSC) in a stimulation-dependent manner. Interacts (via the PUB domain) with OTULIN (via the PIM motif); the interaction is direct. Interacts (via the PUB domain) with VCP (via the PIM motif). Interacts (via the PUB domain) with SPATA2 (via the PIM motif); interaction is direct and bridges RNF31 and CYLD. Interacts with CYLD; the interaction is indirect and is mediated via SPATA2. Interacts with MUSK. Interacts with CARD11, promoting linear ubiquitination of BCL10. Post-translationally, autoubiquitinated. Interaction with OTULIN is required to suppress formation of 'Met-1'-linked polyubiquitin chains and prevent subsequent inactivation of the LUBAC complex. In terms of processing, cleaved by caspase during apoptosis. As to expression, widely expressed (at protein level). Not expressed in heart.

It localises to the cytoplasm. It catalyses the reaction [E2 ubiquitin-conjugating enzyme]-S-ubiquitinyl-L-cysteine + [acceptor protein]-L-lysine = [E2 ubiquitin-conjugating enzyme]-L-cysteine + [acceptor protein]-N(6)-ubiquitinyl-L-lysine.. Its pathway is protein modification; protein ubiquitination. E3 ubiquitin-protein ligase component of the LUBAC complex which conjugates linear ('Met-1'-linked) polyubiquitin chains to substrates and plays a key role in NF-kappa-B activation and regulation of inflammation. LUBAC conjugates linear polyubiquitin to IKBKG and RIPK1 and is involved in activation of the canonical NF-kappa-B and the JNK signaling pathways. Linear ubiquitination mediated by the LUBAC complex interferes with TNF-induced cell death and thereby prevents inflammation. LUBAC is recruited to the TNF-R1 signaling complex (TNF-RSC) following polyubiquitination of TNF-RSC components by BIRC2 and/or BIRC3 and to conjugate linear polyubiquitin to IKBKG and possibly other components contributing to the stability of the complex. The LUBAC complex is also involved in innate immunity by conjugating linear polyubiquitin chains at the surface of bacteria invading the cytosol to form the ubiquitin coat surrounding bacteria. LUBAC is not able to initiate formation of the bacterial ubiquitin coat, and can only promote formation of linear polyubiquitins on pre-existing ubiquitin. Recruited to the surface of bacteria by RNF213, which initiates the bacterial ubiquitin coat. The bacterial ubiquitin coat acts as an 'eat-me' signal for xenophagy and promotes NF-kappa-B activation. Together with OTULIN, the LUBAC complex regulates the canonical Wnt signaling during angiogenesis. RNF31 is required for linear ubiquitination of BCL10, thereby promoting TCR-induced NF-kappa-B activation. Binds polyubiquitin of different linkage types. This chain is E3 ubiquitin-protein ligase RNF31, found in Mus musculus (Mouse).